Here is a 362-residue protein sequence, read N- to C-terminus: Phosphoserine aminotransferase (362 aa).

L-glutamate is bound at residue R43. Residues A77–R78, W103, T153, D173, and Q196 each bind pyridoxal 5'-phosphate. At K197 the chain carries N6-(pyridoxal phosphate)lysine.

Belongs to the class-V pyridoxal-phosphate-dependent aminotransferase family. SerC subfamily. Homodimer. Requires pyridoxal 5'-phosphate as cofactor.

The protein resides in the cytoplasm. The enzyme catalyses O-phospho-L-serine + 2-oxoglutarate = 3-phosphooxypyruvate + L-glutamate. The catalysed reaction is 4-(phosphooxy)-L-threonine + 2-oxoglutarate = (R)-3-hydroxy-2-oxo-4-phosphooxybutanoate + L-glutamate. It functions in the pathway amino-acid biosynthesis; L-serine biosynthesis; L-serine from 3-phospho-D-glycerate: step 2/3. The protein operates within cofactor biosynthesis; pyridoxine 5'-phosphate biosynthesis; pyridoxine 5'-phosphate from D-erythrose 4-phosphate: step 3/5. Functionally, catalyzes the reversible conversion of 3-phosphohydroxypyruvate to phosphoserine and of 3-hydroxy-2-oxo-4-phosphonooxybutanoate to phosphohydroxythreonine. In Legionella pneumophila (strain Corby), this protein is Phosphoserine aminotransferase.